A 275-amino-acid chain; its full sequence is MKYGKLWPIGVSVLGVIALHVRVLSLEVENSSAVDTCSTHTILPGPKGDDGEAGDTGVLGKLGKDGPKGQKGNKGIIGDSGDLGLIGKIGPIGSKGDKGHKGLPGLPGGKGKSGSYCDCGRYRKVVGQLDVNVAHLKSSLKFVKNVIAGIRETDEKYYYIVREERNYRDALTQCRIRGGTLAMPKDQATNSLIADYISKMGLFRVFIGINDIEKEKQFVYADNSPLQTYSSWKAGEPNDGSGYEDCVEMLSTGHWNDVDCSLTIYFVCEFLKKTK.

An N-terminal signal peptide occupies residues M1–S25. N30 is a glycosylation site (N-linked (GlcNAc...) asparagine). Residues T39–I76 form a disordered region. Residues G51 to K110 form the Collagen-like domain. Residues T153–E269 enclose the C-type lectin domain. Disulfide bonds link C174–C268 and C246–C260.

Belongs to the COLEC10/COLEC11 family.

It is found in the secreted. In terms of biological role, lectin that binds to various sugars: galactose &gt; mannose = fucose &gt; N-acetylglucosamine &gt; N-acetylgalactosamine. The chain is Collectin-10 (colec10) from Xenopus tropicalis (Western clawed frog).